The following is a 763-amino-acid chain: MAP7 domain-containing protein 2 (763 aa).

Positions 1-11 (MERGGGGGFGT) are enriched in gly residues. Disordered stretches follow at residues 1–63 (MERG…KERR), 96–124 (WRKLEEQRQREDQKRAAVEEKRKQKLREE), 149–268 (SWGA…DVGK), and 300–540 (PLRR…KQKE). Residues 52–63 (SGERQRLAKERR) show a composition bias toward basic and acidic residues. Residues 54 to 147 (ERQRLAKERR…RTQQLELKKK (94 aa)) adopt a coiled-coil conformation. A compositionally biased stretch (polar residues) spans 192–206 (ESTNACDKLSTSTMS). Composition is skewed to basic and acidic residues over residues 355-371 (MPKRKAEKEKSNKEREG), 385-400 (ALEKHVVDKHASEKHA), and 430-540 (LAEK…KQKE).

The protein belongs to the MAP7 family. Interacts (via N-terminus) with microtubules; facilitates microtubule stabilization. Interacts with kinesin-1 family members, KIF5A, KIF5B and KIF5C.

It is found in the cytoplasm. The protein localises to the cytoskeleton. Its subcellular location is the microtubule organizing center. It localises to the centrosome. The protein resides in the midbody. It is found in the cell projection. The protein localises to the neuron projection. Its subcellular location is the axon. Microtubule-stabilizing protein involved in the control of cell motility and neurite outgrowth. Acts as a critical cofactor for kinesin transport; in the proximal axon regulates kinesin-1 family members, KIF5A, KIF5B and KIF5C recruitment to microtubules and contributes to kinesin-1-mediated transport in the axons. The chain is MAP7 domain-containing protein 2 (MAP7D2) from Pongo abelii (Sumatran orangutan).